The sequence spans 344 residues: S-adenosylmethionine:tRNA ribosyltransferase-isomerase (344 aa).

Belongs to the QueA family. Monomer.

It is found in the cytoplasm. The catalysed reaction is 7-aminomethyl-7-carbaguanosine(34) in tRNA + S-adenosyl-L-methionine = epoxyqueuosine(34) in tRNA + adenine + L-methionine + 2 H(+). Its pathway is tRNA modification; tRNA-queuosine biosynthesis. Its function is as follows. Transfers and isomerizes the ribose moiety from AdoMet to the 7-aminomethyl group of 7-deazaguanine (preQ1-tRNA) to give epoxyqueuosine (oQ-tRNA). The chain is S-adenosylmethionine:tRNA ribosyltransferase-isomerase from Levilactobacillus brevis (strain ATCC 367 / BCRC 12310 / CIP 105137 / JCM 1170 / LMG 11437 / NCIMB 947 / NCTC 947) (Lactobacillus brevis).